The sequence spans 620 residues: Cilia- and flagella-associated protein 52 (620 aa).

WD repeat units lie at residues 62–106 (GHGN…LIAR), 109–150 (LHKG…AICG), 156–195 (LNVG…RKIW), 288–327 (QLQG…ETLI), 330–369 (CHFE…ELLR), 372–411 (VPNM…LMYT), 415–454 (AHRI…QKLE), 459–498 (EHKS…RNQM), 500–541 (LANT…RELE), 543–582 (SLSG…VTHV), and 585–620 (GHSG…PFAS).

It belongs to the CFAP52 family. Microtubule inner protein component of sperm flagellar doublet microtubules. Interacts with BRCA2. Interacts with the CCT chaperonin complex. Interacts with HSP70. Interacts with AK8. Interacts with CFAP45. Interacts with DNAI1. Interacts with IQDC.

It is found in the cytoplasm. Its subcellular location is the cytoskeleton. The protein resides in the cilium axoneme. The protein localises to the flagellum axoneme. Microtubule inner protein (MIP) part of the dynein-decorated doublet microtubules (DMTs) in cilia axoneme. Important for proper ciliary and flagellar beating. May act in cooperation with CFAP45 and axonemal dynein subunit DNAH11. May play a role in cell growth and/or survival. This chain is Cilia- and flagella-associated protein 52, found in Mus musculus (Mouse).